Reading from the N-terminus, the 694-residue chain is Elongation factor G (694 aa).

One can recognise a tr-type G domain in the interval 8 to 282 (KDYRNIGIMA…AVIDYLPSPV (275 aa)). Residues 17-24 (AHIDAGKT), 81-85 (DTPGH), and 135-138 (NKMD) contribute to the GTP site.

It belongs to the TRAFAC class translation factor GTPase superfamily. Classic translation factor GTPase family. EF-G/EF-2 subfamily.

It localises to the cytoplasm. Its function is as follows. Catalyzes the GTP-dependent ribosomal translocation step during translation elongation. During this step, the ribosome changes from the pre-translocational (PRE) to the post-translocational (POST) state as the newly formed A-site-bound peptidyl-tRNA and P-site-bound deacylated tRNA move to the P and E sites, respectively. Catalyzes the coordinated movement of the two tRNA molecules, the mRNA and conformational changes in the ribosome. This Mesomycoplasma hyopneumoniae (strain J / ATCC 25934 / NCTC 10110) (Mycoplasma hyopneumoniae) protein is Elongation factor G.